The chain runs to 129 residues: Small ribosomal subunit protein uS11 (129 aa).

Belongs to the universal ribosomal protein uS11 family. Part of the 30S ribosomal subunit. Interacts with proteins S7 and S18. Binds to IF-3.

Functionally, located on the platform of the 30S subunit, it bridges several disparate RNA helices of the 16S rRNA. Forms part of the Shine-Dalgarno cleft in the 70S ribosome. This Haemophilus influenzae (strain 86-028NP) protein is Small ribosomal subunit protein uS11.